We begin with the raw amino-acid sequence, 170 residues long: NADH-quinone oxidoreductase subunit B (170 aa).

C37, C38, C102, and C131 together coordinate [4Fe-4S] cluster.

The protein belongs to the complex I 20 kDa subunit family. NDH-1 is composed of 14 different subunits. Subunits NuoB, C, D, E, F, and G constitute the peripheral sector of the complex. [4Fe-4S] cluster serves as cofactor.

It localises to the cell inner membrane. It carries out the reaction a quinone + NADH + 5 H(+)(in) = a quinol + NAD(+) + 4 H(+)(out). NDH-1 shuttles electrons from NADH, via FMN and iron-sulfur (Fe-S) centers, to quinones in the respiratory chain. The immediate electron acceptor for the enzyme in this species is believed to be ubiquinone. Couples the redox reaction to proton translocation (for every two electrons transferred, four hydrogen ions are translocated across the cytoplasmic membrane), and thus conserves the redox energy in a proton gradient. The protein is NADH-quinone oxidoreductase subunit B of Geotalea uraniireducens (strain Rf4) (Geobacter uraniireducens).